The sequence spans 387 residues: 3-ketoacyl-CoA thiolase (387 aa).

Cys-91 serves as the catalytic Acyl-thioester intermediate. Active-site proton acceptor residues include His-343 and Cys-373.

The protein belongs to the thiolase-like superfamily. Thiolase family. Heterotetramer of two alpha chains (FadB) and two beta chains (FadA).

The protein resides in the cytoplasm. It carries out the reaction an acyl-CoA + acetyl-CoA = a 3-oxoacyl-CoA + CoA. It participates in lipid metabolism; fatty acid beta-oxidation. In terms of biological role, catalyzes the final step of fatty acid oxidation in which acetyl-CoA is released and the CoA ester of a fatty acid two carbons shorter is formed. This Salmonella choleraesuis (strain SC-B67) protein is 3-ketoacyl-CoA thiolase.